A 541-amino-acid polypeptide reads, in one-letter code: tRNA uridine(34) acetyltransferase (541 aa).

Positions 76-336 are radical S-adenosyl-L-methionine (rSAM); that stretch reads KPVRTISGVA…GEYKPYREEE (261 aa). A Radical SAM core domain is found at 79-350; the sequence is RTISGVAVVA…ISYAKSIMPK (272 aa). C96, C101, and C104 together coordinate [4Fe-4S] cluster. Acetyl-CoA contacts are provided by residues K156, 467 to 470, 491 to 493, and Y524; these read QLHV and YGR. The region spanning 401–541 is the N-acetyltransferase domain; the sequence is VMYKKGIMPD…VGAYMGKYLE (141 aa).

It belongs to the ELP3 family. It depends on [4Fe-4S] cluster as a cofactor.

It catalyses the reaction uridine(34) in tRNA + acetyl-CoA + S-adenosyl-L-methionine + H2O = 5-(carboxymethyl)uridine(34) in tRNA + 5'-deoxyadenosine + L-methionine + CoA + 2 H(+). It functions in the pathway tRNA modification. TRNA uridine(34) acetyltransferase, which mediates formation of carboxymethyluridine in the wobble base at position 34 in tRNAs. The proposed mechanism is the following: (i) recruits S-adenosyl-L-methionine and cleaves it to generate a 5'-deoxyadenosine radical (5'-dA) in the radical S-adenosyl-L-methionine (rSAM) region, (ii) hydrolyzes acetyl-CoA in the N-acetyltransferase domain and (iii) an acetyl radical is formed by the products of the two domains and (iv) is transferred onto the C5 position of uridine(34) in the bound tRNA molecule. Does not show protein lysine acetyltransferase activity. The chain is tRNA uridine(34) acetyltransferase from Methanocaldococcus jannaschii (strain ATCC 43067 / DSM 2661 / JAL-1 / JCM 10045 / NBRC 100440) (Methanococcus jannaschii).